The chain runs to 150 residues: Urease subunit beta (150 aa).

Positions 122-140 are enriched in low complexity; the sequence is GAVVGDSPAATPGTTGATG. Residues 122–150 form a disordered region; the sequence is GAVVGDSPAATPGTTGATGDLPGYLGEGS.

This sequence belongs to the urease beta subunit family. Heterotrimer of UreA (gamma), UreB (beta) and UreC (alpha) subunits. Three heterotrimers associate to form the active enzyme.

The protein localises to the cytoplasm. The catalysed reaction is urea + 2 H2O + H(+) = hydrogencarbonate + 2 NH4(+). It functions in the pathway nitrogen metabolism; urea degradation; CO(2) and NH(3) from urea (urease route): step 1/1. In Frankia alni (strain DSM 45986 / CECT 9034 / ACN14a), this protein is Urease subunit beta.